The chain runs to 280 residues: Elongation factor Ts (280 aa).

The tract at residues 79 to 82 (TDFV) is involved in Mg(2+) ion dislocation from EF-Tu.

Belongs to the EF-Ts family.

Its subcellular location is the cytoplasm. In terms of biological role, associates with the EF-Tu.GDP complex and induces the exchange of GDP to GTP. It remains bound to the aminoacyl-tRNA.EF-Tu.GTP complex up to the GTP hydrolysis stage on the ribosome. In Vibrio vulnificus (strain CMCP6), this protein is Elongation factor Ts.